The primary structure comprises 565 residues: Frizzled-2 (565 aa).

The N-terminal stretch at Met-1 to Ala-23 is a signal peptide. Topologically, residues Gln-24–Trp-247 are extracellular. The FZ domain occupies Pro-34 to Gln-153. Intrachain disulfides connect Cys-39/Cys-100, Cys-47/Cys-93, Cys-84/Cys-121, Cys-110/Cys-150, and Cys-114/Cys-138. Asn-53 carries an N-linked (GlcNAc...) asparagine glycan. N-linked (GlcNAc...) asparagine glycosylation occurs at Asn-154. The interval Ala-160–Pro-189 is disordered. Gly residues predominate over residues Pro-174 to Ala-188. A helical transmembrane segment spans residues Ile-248–Val-268. Over Asp-269–Pro-279 the chain is Cytoplasmic. A helical membrane pass occupies residues Ile-280–Leu-300. Residues Gln-301–Cys-327 are Extracellular-facing. Residues Thr-328 to Leu-348 form a helical membrane-spanning segment. Over Ser-349 to Gln-370 the chain is Cytoplasmic. Residues Tyr-371–Gly-391 traverse the membrane as a helical segment. Over Gln-392–Gly-414 the chain is Extracellular. A helical transmembrane segment spans residues Phe-415–Phe-435. Residues Val-436–Arg-461 are Cytoplasmic-facing. The helical transmembrane segment at Ile-462–Tyr-482 threads the bilayer. Residues Glu-483 to Thr-519 are Extracellular-facing. A helical transmembrane segment spans residues Val-520 to Trp-540. The Cytoplasmic segment spans residues Ser-541–Val-565. The Lys-Thr-X-X-X-Trp motif, mediates interaction with the PDZ domain of Dvl family members motif lies at Lys-543–Trp-548. The short motif at Thr-563–Val-565 is the PDZ-binding element.

It belongs to the G-protein coupled receptor Fz/Smo family. (Microbial infection) Interacts with C.difficile toxin TcdB; frizzled receptors constitute the major host receptors for TcdB in the colonic epithelium. Ubiquitinated by ZNRF3, leading to its degradation by the proteasome. Widely expressed. In the adult, mainly found in heart, placenta, skeletal muscle, lung, kidney, pancreas, prostate, testis, ovary and colon. In the fetus, expressed in brain, lung and kidney. Low levels in fetal liver.

The protein localises to the membrane. It localises to the cell membrane. Its function is as follows. Receptor for Wnt proteins. Most of frizzled receptors are coupled to the beta-catenin canonical signaling pathway, which leads to the activation of disheveled proteins, inhibition of GSK-3 kinase, nuclear accumulation of beta-catenin and activation of Wnt target genes. A second signaling pathway involving PKC and calcium fluxes has been seen for some family members, but it is not yet clear if it represents a distinct pathway or if it can be integrated in the canonical pathway, as PKC seems to be required for Wnt-mediated inactivation of GSK-3 kinase. Both pathways seem to involve interactions with G-proteins. May be involved in transduction and intercellular transmission of polarity information during tissue morphogenesis and/or in differentiated tissues. Functionally, (Microbial infection) Acts as a receptor for C.difficile toxin TcdB in the colonic epithelium. TcdB occupies the binding site for Wnt-adducted palmitoleate in frizzled receptors and TcdB-binding prevents Wnt-binding and downstream Wnt signaling. This Homo sapiens (Human) protein is Frizzled-2 (FZD2).